Reading from the N-terminus, the 350-residue chain is Holliday junction branch migration complex subunit RuvB (350 aa).

Residues 1–184 (MSKTPERLVT…FGIPIRLEFY (184 aa)) are large ATPase domain (RuvB-L). Residues leucine 23, arginine 24, glycine 65, lysine 68, threonine 69, threonine 70, 131 to 133 (EDF), arginine 174, tyrosine 184, and arginine 221 contribute to the ATP site. A Mg(2+)-binding site is contributed by threonine 69. A small ATPAse domain (RuvB-S) region spans residues 185–255 (TIEELERIVL…LADKALSLLD (71 aa)). The tract at residues 258-350 (PIGLDQMDRR…GLFPDQSEED (93 aa)) is head domain (RuvB-H). Residues arginine 294, arginine 313, and arginine 318 each contribute to the DNA site.

Belongs to the RuvB family. In terms of assembly, homohexamer. Forms an RuvA(8)-RuvB(12)-Holliday junction (HJ) complex. HJ DNA is sandwiched between 2 RuvA tetramers; dsDNA enters through RuvA and exits via RuvB. An RuvB hexamer assembles on each DNA strand where it exits the tetramer. Each RuvB hexamer is contacted by two RuvA subunits (via domain III) on 2 adjacent RuvB subunits; this complex drives branch migration. In the full resolvosome a probable DNA-RuvA(4)-RuvB(12)-RuvC(2) complex forms which resolves the HJ.

Its subcellular location is the cytoplasm. The catalysed reaction is ATP + H2O = ADP + phosphate + H(+). Its function is as follows. The RuvA-RuvB-RuvC complex processes Holliday junction (HJ) DNA during genetic recombination and DNA repair, while the RuvA-RuvB complex plays an important role in the rescue of blocked DNA replication forks via replication fork reversal (RFR). RuvA specifically binds to HJ cruciform DNA, conferring on it an open structure. The RuvB hexamer acts as an ATP-dependent pump, pulling dsDNA into and through the RuvAB complex. RuvB forms 2 homohexamers on either side of HJ DNA bound by 1 or 2 RuvA tetramers; 4 subunits per hexamer contact DNA at a time. Coordinated motions by a converter formed by DNA-disengaged RuvB subunits stimulates ATP hydrolysis and nucleotide exchange. Immobilization of the converter enables RuvB to convert the ATP-contained energy into a lever motion, pulling 2 nucleotides of DNA out of the RuvA tetramer per ATP hydrolyzed, thus driving DNA branch migration. The RuvB motors rotate together with the DNA substrate, which together with the progressing nucleotide cycle form the mechanistic basis for DNA recombination by continuous HJ branch migration. Branch migration allows RuvC to scan DNA until it finds its consensus sequence, where it cleaves and resolves cruciform DNA. This chain is Holliday junction branch migration complex subunit RuvB, found in Beijerinckia indica subsp. indica (strain ATCC 9039 / DSM 1715 / NCIMB 8712).